The following is a 134-amino-acid chain: Small ribosomal subunit protein uS11 (134 aa).

Positions 114–134 (SISDVTPQPHNGCRPPKRRRV) are disordered.

Belongs to the universal ribosomal protein uS11 family. In terms of assembly, part of the 30S ribosomal subunit. Interacts with proteins S7 and S18. Binds to IF-3.

Its function is as follows. Located on the platform of the 30S subunit, it bridges several disparate RNA helices of the 16S rRNA. Forms part of the Shine-Dalgarno cleft in the 70S ribosome. The sequence is that of Small ribosomal subunit protein uS11 from Corynebacterium efficiens (strain DSM 44549 / YS-314 / AJ 12310 / JCM 11189 / NBRC 100395).